The following is a 119-amino-acid chain: MANSKRDLFLKRRLRVRNKLKKMADGRPRLSVHRSGKNISVQLIDDVQGRTLAAASSLEKDLGIVGKNNVEASAKVGAAIAERAKKAGIEECYFDRGGFLFHGKVKALADAAREGGLKF.

Belongs to the universal ribosomal protein uL18 family. As to quaternary structure, part of the 50S ribosomal subunit; part of the 5S rRNA/L5/L18/L25 subcomplex. Contacts the 5S and 23S rRNAs.

Functionally, this is one of the proteins that bind and probably mediate the attachment of the 5S RNA into the large ribosomal subunit, where it forms part of the central protuberance. In Dinoroseobacter shibae (strain DSM 16493 / NCIMB 14021 / DFL 12), this protein is Large ribosomal subunit protein uL18.